We begin with the raw amino-acid sequence, 363 residues long: MSTILNVLTDTWSPRAKKLEGDAKIWAIGTATPANWVDQTTYPDFYFRITNSQHLLEHKEKFRRICNKSKIRKRHLVLTEELLKKNPNLCTYNETSLNTRQDILVAEVPKLGKEAAMKAIKEWGRPISEITHLVFCTTSGVDMPGADFQLTKLLGLNSSVKRLMMYQQGCNAGAAMLRLAKDLAESNKGGRVLVVCAEITINIFRGPSLEQDDNLLAQCLFGDGAAAMIVAADPRPGLETPLFELVSSAQTIVPNTDSHLKLHLREMGLTFHCSKAVPSVLAENVEDCLVKAFEPYGISDWNSIFWVFHPGGNAIVDRVEERLGLGPEKFRASRDVLSEYGNLTSACVLFTLDEMRKKSKKDE.

Cys-170 is a catalytic residue.

It belongs to the thiolase-like superfamily. Chalcone/stilbene synthases family.

It catalyses the reaction (E)-4-coumaroyl-CoA + 3 malonyl-CoA + 3 H(+) = 2',4,4',6'-tetrahydroxychalcone + 3 CO2 + 4 CoA. It participates in secondary metabolite biosynthesis; flavonoid biosynthesis. Functionally, the primary product of this enzyme is 4,2',4',6'-tetrahydroxychalcone (also termed naringenin-chalcone or chalcone) which can under specific conditions spontaneously isomerize into naringenin. This chain is Chalcone synthase B (CHSB), found in Ipomoea nil (Japanese morning glory).